Here is a 150-residue protein sequence, read N- to C-terminus: Large ribosomal subunit protein uL13 (150 aa).

The tract at residues 130-150 (EHPHAAQQPKTLQLDPAASAQ) is disordered.

The protein belongs to the universal ribosomal protein uL13 family. Part of the 50S ribosomal subunit.

In terms of biological role, this protein is one of the early assembly proteins of the 50S ribosomal subunit, although it is not seen to bind rRNA by itself. It is important during the early stages of 50S assembly. The chain is Large ribosomal subunit protein uL13 from Synechococcus sp. (strain CC9311).